We begin with the raw amino-acid sequence, 645 residues long: Macrolide export ATP-binding/permease protein MacB (645 aa).

Positions 6–244 constitute an ABC transporter domain; sequence IELKDVTRYY…EAPQYRYARK (239 aa). An ATP-binding site is contributed by 42–49; it reads GQSGSGKS. The next 4 membrane-spanning stretches (helical) occupy residues 271 to 291, 520 to 540, 577 to 597, and 608 to 628; these read ALTL…LAIG, FSIL…IGVM, VVGG…VFII, and PLPA…FGLL.

It belongs to the ABC transporter superfamily. Macrolide exporter (TC 3.A.1.122) family. In terms of assembly, homodimer.

It localises to the cell inner membrane. Non-canonical ABC transporter that contains transmembrane domains (TMD), which form a pore in the inner membrane, and an ATP-binding domain (NBD), which is responsible for energy generation. Confers resistance against macrolides. In Hyphomonas neptunium (strain ATCC 15444), this protein is Macrolide export ATP-binding/permease protein MacB.